An 804-amino-acid chain; its full sequence is MAVSKITLHYAQTTGGSNEAAAAFPWNTPKKAVNPYLDPAEFAPESALSNLIALYAVDNEQEQLRRETLSDEVWERYFFNESRDPVQREMEQDRLINHAKTAREQQRFNPDLVIIANVGAQPAHISKPLLERIKYFHSLGRAKAYSRYLQKTIRPCLERLERVRDSQVSASFRFMASHDGLEGLLVLPEMNQDQVKRLSTLVAAHMSMCLDAACGDLFVSDDVKPEEIRQAWERVAAEAMRLEVIPPAFEQLRRKKRRRKPVPYELIPPSLARMLCADWWYRKLWQMRCEWREEQLRAVCLVNKKASPYVSYEAVIHKREQRRKSLEFFRSHELINEDGDTLDMEDVVNASNSNPAHRRNEMMACVKGLELIAEMRGDCAVFYTITCPSRFHATLNNGRPNPKWTSATVRQSSDYLVDTFAAFRKAMHKAGLRWYGVRVAEPHHDGTVHWHLLCFMRKKDRRSITALLRKFAIREDREELGANTGPRFKPELINPRKGTPTSYIAKYISKNIDGRGLAKEISKETGRSLRDSAEHVSAWASLHRVQQFRFFGIPGRQAYRELRLLAGQAARVQGERKAGAPVLDNPRLDAVLAAADAGCFATYIMKQGGVLVPRKHHLVRTAYELNDEPSAYGDHGIRIYGIWSPIAEGKICTHAVKWKKVRKAVDVQEAAADQGACAPWTRTRTRGNNCPPVENLNKSGGDLPDIKTMNEKELQDYLHNMGQKERRELTARLRLVKPKRKTVYKQNISEQQRLQLEAELTARGFEGSASEIDLLLRGGSIPSGAGLRIFYRNHRLQEDDKWRQ.

Active-site O-(5'-phospho-DNA)-tyrosine intermediate residues include Y503 and Y507.

Belongs to the phage GPA family.

Its function is as follows. Possible endonuclease which induces a single-strand cut and initiates DNA replication. The polypeptide is Probable replication endonuclease from prophage-like region 2 (Salmonella typhi).